The sequence spans 147 residues: Large ribosomal subunit protein uL15 (147 aa).

Residues 1-65 form a disordered region; it reads MQLHELKPAP…PLQRRLPKRG (65 aa). 2 stretches are compositionally biased toward gly residues: residues 21-31 and 42-52; these read QGIGSGLGKTA and SGGGVRPGFEG.

It belongs to the universal ribosomal protein uL15 family. Part of the 50S ribosomal subunit.

Its function is as follows. Binds to the 23S rRNA. The polypeptide is Large ribosomal subunit protein uL15 (Heliobacterium modesticaldum (strain ATCC 51547 / Ice1)).